Reading from the N-terminus, the 224-residue chain is Polysialic acid transport ATP-binding protein KpsT (224 aa).

The region spanning 2-223 is the ABC transporter domain; that stretch reads IKIENLTKSY…EYKMYQDLDI (222 aa). Position 38-45 (38-45) interacts with ATP; that stretch reads GRNGAGKS.

This sequence belongs to the ABC transporter superfamily.

It is found in the cell inner membrane. Its function is as follows. Putative ATP-binding protein, and an energy coupling component for the transport of polysialic acid across the cytoplasmic membrane. The sequence is that of Polysialic acid transport ATP-binding protein KpsT (kpsT) from Escherichia coli.